The primary structure comprises 237 residues: Class B acid phosphatase (237 aa).

The first 23 residues, 1-23, serve as a signal peptide directing secretion; sequence MRKVTLTLSAIALALSLNGAAMA. Aspartate 69 serves as the catalytic Nucleophile. 2 residues coordinate Mg(2+): aspartate 69 and aspartate 71. The Proton donor role is filled by aspartate 71. Substrate-binding positions include 137–138 and lysine 177; that span reads TG. Residue aspartate 192 participates in Mg(2+) binding.

The protein belongs to the class B bacterial acid phosphatase family. In terms of assembly, homotetramer. The cofactor is Mg(2+).

The protein localises to the periplasm. It carries out the reaction a phosphate monoester + H2O = an alcohol + phosphate. Dephosphorylates several organic phosphate monoesters. Also has a phosphotransferase activity catalyzing the transfer of low-energy phosphate groups from organic phosphate monoesters to free hydroxyl groups of various organic compounds. This chain is Class B acid phosphatase, found in Proteus mirabilis (strain HI4320).